The primary structure comprises 272 residues: IMGHMVNSLAQIDEFVGLGSNSIETDVSFDKQANPEYTYHGIPCDCGRSCGHSTKFNDFLKGLRKATTPGDSKYHEKLILVVFDLKTGSLYDNQAYDAGTKLAKNLLQHYWNNGNNGGRAYIILSIPKLNHYKLITGFKETLKNEGHGDLLEKVGHGFSGNDDISEVQKTYNKAGVTGHVWQSDGITNCLLRGLSRVKAAVANRDSGSGIINKVYYWTVDKRSTTRDSLDAKVDGIMTNYPDITVEILNEDAYKKKFRIATYEDNPWETFKE.

Residue His4 is part of the active site. Mg(2+) is bound by residues Glu24 and Asp26. His40 serves as the catalytic Nucleophile. 2 disulfide bridges follow: Cys44–Cys50 and Cys46–Cys189. Asp84 contributes to the Mg(2+) binding site.

It belongs to the arthropod phospholipase D family. Class II subfamily. Mg(2+) is required as a cofactor. Expressed by the venom gland.

The protein resides in the secreted. The catalysed reaction is an N-(acyl)-sphingosylphosphocholine = an N-(acyl)-sphingosyl-1,3-cyclic phosphate + choline. It carries out the reaction an N-(acyl)-sphingosylphosphoethanolamine = an N-(acyl)-sphingosyl-1,3-cyclic phosphate + ethanolamine. The enzyme catalyses a 1-acyl-sn-glycero-3-phosphocholine = a 1-acyl-sn-glycero-2,3-cyclic phosphate + choline. It catalyses the reaction a 1-acyl-sn-glycero-3-phosphoethanolamine = a 1-acyl-sn-glycero-2,3-cyclic phosphate + ethanolamine. Functionally, dermonecrotic toxins cleave the phosphodiester linkage between the phosphate and headgroup of certain phospholipids (sphingolipid and lysolipid substrates), forming an alcohol (often choline) and a cyclic phosphate. This toxin acts on sphingomyelin (SM). It may also act on ceramide phosphoethanolamine (CPE), lysophosphatidylcholine (LPC) and lysophosphatidylethanolamine (LPE), but not on lysophosphatidylserine (LPS), and lysophosphatidylglycerol (LPG). It acts by transphosphatidylation, releasing exclusively cyclic phosphate products as second products. Induces dermonecrosis, hemolysis, increased vascular permeability, edema, inflammatory response, and platelet aggregation. The protein is Dermonecrotic toxin LvSicTox-alphaIC1aiii of Loxosceles variegata (Recluse spider).